The primary structure comprises 78 residues: Large ribosomal subunit protein bL28 (78 aa).

A disordered region spans residues 1–24 (MSQVCQVTGKRPVTGNNVSHSQRK).

This sequence belongs to the bacterial ribosomal protein bL28 family.

The sequence is that of Large ribosomal subunit protein bL28 from Chromohalobacter salexigens (strain ATCC BAA-138 / DSM 3043 / CIP 106854 / NCIMB 13768 / 1H11).